The sequence spans 297 residues: uncharacterized protein (297 aa).

Disordered regions lie at residues 19–133 (NEVD…EEKE), 147–214 (AEDD…VGIA), and 226–277 (EKTS…SKEA). The span at 41–52 (EEPKNEKEKHDD) shows a compositional bias: basic and acidic residues. The span at 77 to 87 (PAEDDEEDEEF) shows a compositional bias: acidic residues. Residues 88–101 (PSQSYGPSIPSNFR) show a composition bias toward polar residues. 2 stretches are compositionally biased toward basic and acidic residues: residues 147–161 (AEDD…REEW) and 236–268 (IHQK…EVRG).

This is an uncharacterized protein from Caenorhabditis elegans.